Here is a 107-residue protein sequence, read N- to C-terminus: MTEKKNRREKKNPREAKITFEGLVMEALPNGMFRVRLENDTIILGYISGKIRSSSIRILMGDRVKIEVSRYDSSKGRIIYRLPHKDSKRTEDSKDTEDLKDTKDSKG.

Residues 8 to 83 enclose the S1-like domain; it reads REKKNPREAK…SKGRIIYRLP (76 aa). The tract at residues 81 to 107 is disordered; the sequence is RLPHKDSKRTEDSKDTEDLKDTKDSKG. A compositionally biased stretch (basic and acidic residues) spans 83–107; that stretch reads PHKDSKRTEDSKDTEDLKDTKDSKG.

This sequence belongs to the IF-1 family. In terms of assembly, component of the 30S ribosomal translation pre-initiation complex which assembles on the 30S ribosome in the order IF-2 and IF-3, IF-1 and N-formylmethionyl-tRNA(fMet); mRNA recruitment can occur at any time during PIC assembly.

It localises to the plastid. The protein localises to the chloroplast. Its function is as follows. One of the essential components for the initiation of protein synthesis. Stabilizes the binding of IF-2 and IF-3 on the 30S subunit to which N-formylmethionyl-tRNA(fMet) subsequently binds. Helps modulate mRNA selection, yielding the 30S pre-initiation complex (PIC). Upon addition of the 50S ribosomal subunit IF-1, IF-2 and IF-3 are released leaving the mature 70S translation initiation complex. In Oryza sativa subsp. indica (Rice), this protein is Translation initiation factor IF-1, chloroplastic.